Consider the following 130-residue polypeptide: Large ribosomal subunit protein bL17 (130 aa).

The protein belongs to the bacterial ribosomal protein bL17 family. Part of the 50S ribosomal subunit. Contacts protein L32.

The chain is Large ribosomal subunit protein bL17 from Nitrosomonas europaea (strain ATCC 19718 / CIP 103999 / KCTC 2705 / NBRC 14298).